Here is a 615-residue protein sequence, read N- to C-terminus: UvrABC system protein C (615 aa).

The region spanning 12 to 91 (EKPGVYIMKD…IKKYKPKYNV (80 aa)) is the GIY-YIG domain. The UVR domain occupies 203–238 (DWLIQKLKEDMKKAAEELRFEEAARIRDQIFAIERT).

It belongs to the UvrC family. In terms of assembly, interacts with UvrB in an incision complex.

It is found in the cytoplasm. Functionally, the UvrABC repair system catalyzes the recognition and processing of DNA lesions. UvrC both incises the 5' and 3' sides of the lesion. The N-terminal half is responsible for the 3' incision and the C-terminal half is responsible for the 5' incision. This Thermoanaerobacter pseudethanolicus (strain ATCC 33223 / 39E) (Clostridium thermohydrosulfuricum) protein is UvrABC system protein C.